The chain runs to 586 residues: Potassium-transporting ATPase potassium-binding subunit (586 aa).

A run of 12 helical transmembrane segments spans residues 11–31, 67–87, 136–156, 179–199, 279–299, 306–326, 351–371, 381–401, 403–423, 442–462, 507–527, and 551–571; these read LFLVLLLAVVKPMGAFMAKVF, AVAVLLFNLALFVSLFAILML, GLAVHNFVSAATGIAVAIAVI, LYVLLPISLIGALILVSQGVI, VEIFLILLIPFALTSTFGVMV, WAILGVMLLMMAISFAVLQGV, FGLAGASLFTVATTGTSCGAV, LGGMIPLGLILLGEIAPGGVG, GLYTMLAFVVIAVFVAGLMIG, IITVLAAGVVVLILSGVAMIT, ILGSLAMLVGRFAPAVAVLAM, and FALWLMLVILIVGALTFFPAL.

It belongs to the KdpA family. As to quaternary structure, the system is composed of three essential subunits: KdpA, KdpB and KdpC.

Its subcellular location is the cell inner membrane. In terms of biological role, part of the high-affinity ATP-driven potassium transport (or Kdp) system, which catalyzes the hydrolysis of ATP coupled with the electrogenic transport of potassium into the cytoplasm. This subunit binds the periplasmic potassium ions and delivers the ions to the membrane domain of KdpB through an intramembrane tunnel. This chain is Potassium-transporting ATPase potassium-binding subunit, found in Geobacter metallireducens (strain ATCC 53774 / DSM 7210 / GS-15).